The following is a 286-amino-acid chain: Transcription factor bHLH11 (286 aa).

A disordered region spans residues Met1 to Ala34. Positions Asp18–Ser27 are enriched in low complexity. Positions Ala44–Val94 constitute a bHLH domain. Disordered stretches follow at residues Glu182 to Asp202 and Gln244 to Pro286. Composition is skewed to low complexity over residues Gln183–Ser198 and Ser255–Ser269. Residues Gln270–Thr279 show a composition bias toward polar residues.

Homodimer. Expressed consitutively in roots, leaves, stems, and flowers.

Its subcellular location is the nucleus. This Arabidopsis thaliana (Mouse-ear cress) protein is Transcription factor bHLH11 (BHLH11).